Reading from the N-terminus, the 301-residue chain is E3 ubiquitin-protein ligase RNF144B (301 aa).

The segment at 26–242 (PLVTCKLCLC…YDKGPCRNKL (217 aa)) is TRIAD supradomain. Positions 30, 33, 53, 56, 121, 126, 145, 148, 153, 156, 161, 166, 191, and 194 each coordinate Zn(2+). Residues 30–80 (CKLCLCEQSLDKMTMLQECQCIFCTPCLKQYMVLSIREGCGSPITCPDMVC) form an RING-type 1 zinc finger. The segment at 101-166 (QLYQRLKFER…KDAWHEESSC (66 aa)) adopts an IBR-type zinc-finger fold. The segment at 191–220 (CPVCRIYIERNEGCAQMMCKNCKHTFCWYC) adopts an RING-type 2; atypical zinc-finger fold. Cysteine 204 is a catalytic residue. Positions 209, 212, 217, 220, 232, and 238 each coordinate Zn(2+). A helical membrane pass occupies residues 256 to 276 (VVGILVGLGVIALVTSPLLLL).

The protein belongs to the RBR family. RNF144 subfamily. In terms of assembly, interacts with UBE2L3, UBE2L6 and LCMT2, as well as with BAX. Interacts with TBK1; this interaction inhibits TBK1 phosphorylation and 'Lys-63'-linked polyubiquitination. In terms of processing, auto-ubiquitinated.

It is found in the mitochondrion membrane. Its subcellular location is the cytoplasm. It carries out the reaction [E2 ubiquitin-conjugating enzyme]-S-ubiquitinyl-L-cysteine + [acceptor protein]-L-lysine = [E2 ubiquitin-conjugating enzyme]-L-cysteine + [acceptor protein]-N(6)-ubiquitinyl-L-lysine.. It participates in protein modification; protein ubiquitination. Its function is as follows. E3 ubiquitin-protein ligase which accepts ubiquitin from E2 ubiquitin-conjugating enzymes UBE2L3 and UBE2L6 in the form of a thioester and then directly transfers the ubiquitin to targeted substrates such as LCMT2, thereby promoting their degradation. Induces apoptosis via a p53/TP53-dependent but caspase-independent mechanism. Plays a crucial role in maintaining the genomic stability by controlling the degradation of multiple proteins involved in mitotic progression and DNA damage. Regulates epithelial homeostasis by mediating degradation of CDKN1A and isoform 2 of TP63. Plays a regulatory role in innate immunity by negatively regulating IRF3 activation and IFN-beta production. Mechanistically, inhibits TBK1 phosphorylation and 'Lys-63'-linked polyubiquitination independently of its E3 ligase activity. Alternatively, promotes 'Lys-27' and 'Lys-33'-linked ubiquitination of IFIH1/MDA5, promoting selective autophagic degradation of IFIH1/MDA5 to inhibit antiviral response. This chain is E3 ubiquitin-protein ligase RNF144B (Rnf144b), found in Mus musculus (Mouse).